Consider the following 100-residue polypeptide: Small ribosomal subunit protein uS14c (100 aa).

The protein belongs to the universal ribosomal protein uS14 family. Part of the 30S ribosomal subunit.

It is found in the plastid. The protein resides in the chloroplast. Binds 16S rRNA, required for the assembly of 30S particles. The polypeptide is Small ribosomal subunit protein uS14c (Barbarea verna (Land cress)).